Here is a 466-residue protein sequence, read N- to C-terminus: Dihydrolipoyl dehydrogenase (466 aa).

Residues 34-42 (ERVHLGGIC), Lys-51, and Gly-114 contribute to the FAD site. Cys-42 and Cys-47 are joined by a disulfide. Residues 180–184 (GSGAI), Glu-203, and 269–272 (AIGV) contribute to the NAD(+) site. Asp-311 and Ala-319 together coordinate FAD. The active-site Proton acceptor is the His-445.

Belongs to the class-I pyridine nucleotide-disulfide oxidoreductase family. Homodimer. It depends on FAD as a cofactor.

The protein localises to the cytoplasm. It carries out the reaction N(6)-[(R)-dihydrolipoyl]-L-lysyl-[protein] + NAD(+) = N(6)-[(R)-lipoyl]-L-lysyl-[protein] + NADH + H(+). In terms of biological role, lipoamide dehydrogenase is a component of the alpha-ketoacid dehydrogenase complexes. The chain is Dihydrolipoyl dehydrogenase (lpd) from Zymomonas mobilis subsp. mobilis (strain ATCC 31821 / ZM4 / CP4).